We begin with the raw amino-acid sequence, 319 residues long: D-ribose/D-allose-binding protein (319 aa).

The N-terminal stretch at 1 to 29 (MKRVASRRLLAAVVLTACSSFLPLSAVHA) is a signal peptide.

The protein belongs to the bacterial solute-binding protein 2 family.

The protein resides in the periplasm. Functionally, binds specifically both D-ribose and D-allose, with affinities in the lower micromolar range. This chain is D-ribose/D-allose-binding protein, found in Pseudomonas aeruginosa (strain ATCC 15692 / DSM 22644 / CIP 104116 / JCM 14847 / LMG 12228 / 1C / PRS 101 / PAO1).